Consider the following 114-residue polypeptide: Large ribosomal subunit protein uL24 (114 aa).

This sequence belongs to the universal ribosomal protein uL24 family. Part of the 50S ribosomal subunit.

Functionally, one of two assembly initiator proteins, it binds directly to the 5'-end of the 23S rRNA, where it nucleates assembly of the 50S subunit. In terms of biological role, one of the proteins that surrounds the polypeptide exit tunnel on the outside of the subunit. This is Large ribosomal subunit protein uL24 from Acidothermus cellulolyticus (strain ATCC 43068 / DSM 8971 / 11B).